The sequence spans 125 residues: Small ribosomal subunit protein uS13 (125 aa).

The interval 92-125 (RRSLPVRGQRTRTNARTRKGKRKTVAGKKKAVKK) is disordered.

This sequence belongs to the universal ribosomal protein uS13 family. In terms of assembly, part of the 30S ribosomal subunit. Forms a loose heterodimer with protein S19. Forms two bridges to the 50S subunit in the 70S ribosome.

Located at the top of the head of the 30S subunit, it contacts several helices of the 16S rRNA. In the 70S ribosome it contacts the 23S rRNA (bridge B1a) and protein L5 of the 50S subunit (bridge B1b), connecting the 2 subunits; these bridges are implicated in subunit movement. Contacts the tRNAs in the A and P-sites. The protein is Small ribosomal subunit protein uS13 of Pelodictyon phaeoclathratiforme (strain DSM 5477 / BU-1).